Consider the following 492-residue polypeptide: Cytochrome P450 2A2 (492 aa).

C437 is a binding site for heme.

It belongs to the cytochrome P450 family. It depends on heme as a cofactor. Liver specific.

The protein localises to the endoplasmic reticulum membrane. It is found in the microsome membrane. The catalysed reaction is an organic molecule + reduced [NADPH--hemoprotein reductase] + O2 = an alcohol + oxidized [NADPH--hemoprotein reductase] + H2O + H(+). Functionally, highly active in the 15-alpha-hydroxylation of testosterone. This Rattus norvegicus (Rat) protein is Cytochrome P450 2A2 (Cyp2a2).